A 179-amino-acid polypeptide reads, in one-letter code: Insulin-like growth factor 2 (179 aa).

Residues 1–24 (MGITAGKSMLALLAFLAFASCCYA) form the signal peptide. Positions 25–52 (AYRPSETLCGGELVDTLQFVCGDRGFYF) are b. Intrachain disulfides connect C33-C71, C45-C84, and C70-C75. Positions 53-64 (SRPSSRINRRSR) are c. An a region spans residues 65–85 (GIVEECCFRSCDLALLETYCA). A d region spans residues 86 to 91 (APAKSE). A propeptide spans 92–179 (RDVSASTTVL…GGASSEASSD (88 aa)) (e peptide). T106 carries an O-linked (GalNAc...) threonine glycan. S154 carries an O-linked (GalNAc...) serine glycan. Residues 160 to 179 (ALPTQDPATHGGASSEASSD) are disordered. An O-linked (GalNAc...) threonine glycan is attached at T163.

This sequence belongs to the insulin family. In terms of assembly, interacts with MYORG; this interaction is required for IGF2 secretion. Interacts with integrins ITGAV:ITGB3 and ITGA6:ITGB4; integrin-binding is required for IGF2 signaling. Interacts with IGFBP2. In terms of processing, proteolytically processed by PCSK4, proIGF2 is cleaved at Arg-128 and Arg-92 to generate big-IGF2 and mature IGF2.

The protein localises to the secreted. Functionally, the insulin-like growth factors possess growth-promoting activity. Major fetal growth hormone in mammals. Plays a key role in regulating fetoplacental development. IGF2 is influenced by placental lactogen. Also involved in tissue differentiation. In adults, involved in glucose metabolism in adipose tissue, skeletal muscle and liver. Acts as a ligand for integrin which is required for IGF2 signaling. Positively regulates myogenic transcription factor MYOD1 function by facilitating the recruitment of transcriptional coactivators, thereby controlling muscle terminal differentiation. Inhibits myoblast differentiation and modulates metabolism via increasing the mitochondrial respiration rate. Preptin undergoes glucose-mediated co-secretion with insulin, and acts as a physiological amplifier of glucose-mediated insulin secretion. Exhibits osteogenic properties by increasing osteoblast mitogenic activity through phosphoactivation of MAPK1 and MAPK3. The chain is Insulin-like growth factor 2 from Ovis aries (Sheep).